Reading from the N-terminus, the 177-residue chain is DELTA-stichotoxin-Hcr4b (177 aa).

A plays an important role in the hemolytic activity region spans residues 3-12 (ALAGTITLGA). The tract at residues 11–30 (GASLGFQILDKVLGELGKVS) is N-terminal region. 7 residues coordinate phosphocholine: Ser54, Val87, Ser105, Pro107, Tyr133, Tyr137, and Tyr138. The tract at residues 105–120 (SVPFDYNLYSNWWDVK) is trp-rich region, which is important for the binding to lipid membrane.

It belongs to the actinoporin family. Sea anemone subfamily. In terms of assembly, octamer or nonamer in membranes. Monomer in the soluble state.

The protein resides in the secreted. It is found in the nematocyst. It localises to the target cell membrane. Pore-forming protein that forms cations-selective hydrophilic pores of around 1 nm and causes cardiac stimulation and cytolysis. Pore formation is a multi-step process that involves specific recognition of membrane sphingomyelin (but neither cholesterol nor phosphatidylcholine) using aromatic rich region and adjacent phosphocholine (POC) binding site, firm binding to the membrane (mainly driven by hydrophobic interactions) accompanied by the transfer of the N-terminal region to the lipid-water interface and finally pore formation after oligomerization of monomers. Cytolytic effects include red blood cells hemolysis, platelet aggregation and lysis, cytotoxic and cytostatic effects on fibroblasts. Lethality in mammals has been ascribed to severe vasospasm of coronary vessels, cardiac arrhythmia, and inotropic effects. Preincubation with exogenous sphingomyeline causes complete loss of hemolytic activity. The sequence is that of DELTA-stichotoxin-Hcr4b from Radianthus crispa (Leathery sea anemone).